We begin with the raw amino-acid sequence, 249 residues long: MRVKIVSKPTSQLNNIIEKIKNISTKLGFEVVDKDFDYVIAVGGDGTLLRAVKQNKPVIAVKAGRRGLLMDVPVDKFEEALLRLKKGDYEEEEYMLLEMIYNDKVELGFNEVGILYDRPEAIKVGISFDTERVSVEGDGVLVSTPQGSSGWGMSATNSLLYKDLSAIEIIFVNPIFYYLRSVVIPPKPLTLRLEDKGYPQTARAVVDGEVVTLIKTNQEITVRVSQRKAKILRFFKLDLIGEVLHAYHI.

The active-site Proton acceptor is the Asp45. Residues 45–46 (DG), Arg50, 110–111 (NE), Asp138, and 149–154 (SGWGMS) each bind NAD(+).

Belongs to the NAD kinase family. The cofactor is a divalent metal cation.

It is found in the cytoplasm. The catalysed reaction is NAD(+) + ATP = ADP + NADP(+) + H(+). In terms of biological role, involved in the regulation of the intracellular balance of NAD and NADP, and is a key enzyme in the biosynthesis of NADP. Catalyzes specifically the phosphorylation on 2'-hydroxyl of the adenosine moiety of NAD to yield NADP. The sequence is that of NAD kinase from Saccharolobus islandicus (strain Y.N.15.51 / Yellowstone #2) (Sulfolobus islandicus).